The primary structure comprises 168 residues: 6,7-dimethyl-8-ribityllumazine synthase (168 aa).

Residues W31, 65–67 (SFE), and 90–92 (NVI) contribute to the 5-amino-6-(D-ribitylamino)uracil site. (2S)-2-hydroxy-3-oxobutyl phosphate is bound at residue 95-96 (ET). The active-site Proton donor is H98. F123 serves as a coordination point for 5-amino-6-(D-ribitylamino)uracil. R137 is a binding site for (2S)-2-hydroxy-3-oxobutyl phosphate.

It belongs to the DMRL synthase family.

The catalysed reaction is (2S)-2-hydroxy-3-oxobutyl phosphate + 5-amino-6-(D-ribitylamino)uracil = 6,7-dimethyl-8-(1-D-ribityl)lumazine + phosphate + 2 H2O + H(+). The protein operates within cofactor biosynthesis; riboflavin biosynthesis; riboflavin from 2-hydroxy-3-oxobutyl phosphate and 5-amino-6-(D-ribitylamino)uracil: step 1/2. In terms of biological role, catalyzes the formation of 6,7-dimethyl-8-ribityllumazine by condensation of 5-amino-6-(D-ribitylamino)uracil with 3,4-dihydroxy-2-butanone 4-phosphate. This is the penultimate step in the biosynthesis of riboflavin. The sequence is that of 6,7-dimethyl-8-ribityllumazine synthase from Christiangramia forsetii (strain DSM 17595 / CGMCC 1.15422 / KT0803) (Gramella forsetii).